The chain runs to 843 residues: MREEEMESSSEGETNKISRCKATGSDNPDEDYVEITLEVRDETINTMKAKATLRSVLSGRLKTMVKSLSFASRRLDRSKSFGAMFALRGLRFIAKNDAVGRGWDEVAMRFDKLAVEGKLPKSKFGHCIGMVESSEFVNELFEALVRRRGTTSSSITKTELFEFWEQITGNSFDDRLQIFFDMVDKNLDGRITGDEVKEIIALSASANKLSKIKENVDEYAALIMEELDRDNLGYIELHNLETLLLQVPSQSNNSPSSANKRALNKMLSQKLIPTKDRNPVKRFAMNISYFFLENWKRIWVLTLWISICITLFTWKFLQYKRKTVFEVMGYCVTVAKGSAETLKFNMALILLPVCRNTITWLRTKSKLIGSVVPFDDNINFHKVVAFGIAVGIGLHAISHLACDFPRLLHAKNVEFEPMKKFFGDERPENYGWFMKGTDGWTGVTMVVLMLVAYVLAQSWFRRNRANLPKSLKRLTGFNAFWYSHHLFVIVYVLLIVHGYFVYLSKEWYHKTTWMYLAVPVLLYAFERLIRAFRPGAKAVKVLKVAVYPGNVLSLYMSKPKGFKYTSGQYIYINCSDVSPLQWHPFSITSASGDDYLSVHIRTLGDWTSQLKSLYSKVCQLPSTSQSGLFIADIGQANNITRFPRLLIDGPYGAPAQDYRNYDVLLLVGLGIGATPLISIIRDVLNNIKNQNSIERGTNQHIKNYVATKRAYFYWVTREQGSLEWFSEVMNEVAEYDSEGMIELHNYCTSVYEEGDARSALITMLQSLHHAKSGIDIVSGTRVRTHFARPNWRSVFKHVAVNHVNQRVGVFYCGNTCIIGELKRLAQDFSRKTTTKFEFHKENF.

Residues 1-10 are compositionally biased toward acidic residues; the sequence is MREEEMESSS. Residues 1–27 form a disordered region; that stretch reads MREEEMESSSEGETNKISRCKATGSDN. Topologically, residues 1–297 are cytoplasmic; sequence MREEEMESSS…SYFFLENWKR (297 aa). 2 EF-hand-like regions span residues 114-122 and 148-159; these read AVEGKLPKS and RGTTSSSITKTE. EF-hand domains lie at 171-206 and 215-250; these read SFDD…SASA and NVDE…VPSQ. Ca(2+) contacts are provided by D184, N186, D188, R190, and E195. Phosphoserine is present on S268. The helical transmembrane segment at 298 to 318 threads the bilayer; sequence IWVLTLWISICITLFTWKFLQ. The Extracellular portion of the chain corresponds to 319–383; it reads YKRKTVFEVM…FDDNINFHKV (65 aa). Positions 336 to 495 constitute a Ferric oxidoreductase domain; that stretch reads KGSAETLKFN…LFVIVYVLLI (160 aa). The chain crosses the membrane as a helical span at residues 384–404; sequence VAFGIAVGIGLHAISHLACDF. Topologically, residues 405 to 439 are cytoplasmic; it reads PRLLHAKNVEFEPMKKFFGDERPENYGWFMKGTDG. A helical membrane pass occupies residues 440–460; it reads WTGVTMVVLMLVAYVLAQSWF. Residues 461–482 are Extracellular-facing; sequence RRNRANLPKSLKRLTGFNAFWY. The helical transmembrane segment at 483-503 threads the bilayer; it reads SHHLFVIVYVLLIVHGYFVYL. The Cytoplasmic portion of the chain corresponds to 504–511; the sequence is SKEWYHKT. The helical transmembrane segment at 512-529 threads the bilayer; the sequence is TWMYLAVPVLLYAFERLI. At 530–659 the chain is on the extracellular side; it reads RAFRPGAKAV…PYGAPAQDYR (130 aa). The region spanning 534–657 is the FAD-binding FR-type domain; it reads PGAKAVKVLK…DGPYGAPAQD (124 aa). A helical transmembrane segment spans residues 660 to 680; that stretch reads NYDVLLLVGLGIGATPLISII. The Cytoplasmic portion of the chain corresponds to 681–843; that stretch reads RDVLNNIKNQ…TKFEFHKENF (163 aa).

This sequence belongs to the RBOH (TC 5.B.1.3) family. As to quaternary structure, monomer and homodimer.

The protein localises to the membrane. Calcium-dependent NADPH oxidase that generates superoxide. This chain is Respiratory burst oxidase homolog protein B (RBOHB), found in Arabidopsis thaliana (Mouse-ear cress).